Reading from the N-terminus, the 352-residue chain is N-acetyl-gamma-glutamyl-phosphate reductase (352 aa).

The active site involves C149.

The protein belongs to the NAGSA dehydrogenase family. Type 1 subfamily.

The protein localises to the cytoplasm. The catalysed reaction is N-acetyl-L-glutamate 5-semialdehyde + phosphate + NADP(+) = N-acetyl-L-glutamyl 5-phosphate + NADPH + H(+). The protein operates within amino-acid biosynthesis; L-arginine biosynthesis; N(2)-acetyl-L-ornithine from L-glutamate: step 3/4. Functionally, catalyzes the NADPH-dependent reduction of N-acetyl-5-glutamyl phosphate to yield N-acetyl-L-glutamate 5-semialdehyde. In Polynucleobacter asymbioticus (strain DSM 18221 / CIP 109841 / QLW-P1DMWA-1) (Polynucleobacter necessarius subsp. asymbioticus), this protein is N-acetyl-gamma-glutamyl-phosphate reductase.